A 288-amino-acid chain; its full sequence is Probable syndecan (288 aa).

The first 26 residues, 1–26 (MILKLNFCLSTYSVLILLSLSTQAFA), serve as a signal peptide directing secretion. Residues 27 to 231 (ANQAKTKVVP…ETLANGFYAA (205 aa)) lie on the Extracellular side of the membrane. The disordered stretch occupies residues 67–175 (EVNGSGYPTD…NIHNDEDFFT (109 aa)). The N-linked (GlcNAc...) asparagine glycan is linked to Asn69. Residues Ser71 and Ser86 are each glycosylated (O-linked (Xyl...) (glycosaminoglycan) serine). Over residues 89 to 104 (PPSSATTKSDKVTSPS) the composition is skewed to polar residues. Residues 106–124 (AVVTAKPTTVPTTTASFKP) show a composition bias toward low complexity. Positions 141–164 (VEEDEDDDEDEDEDDEDDEEDFAD) are enriched in acidic residues. O-linked (Xyl...) (glycosaminoglycan) serine glycosylation is present at Ser214. Residues 232 to 252 (IAGGVLVAVITAILLVLFVVF) traverse the membrane as a helical segment. At 253-288 (RIRKKDEGSYALDEPKQARPYASYGYTKASTKEFYA) the chain is on the cytoplasmic side.

The protein belongs to the syndecan proteoglycan family.

It localises to the membrane. Its subcellular location is the cell surface. The protein resides in the cell junction. It is found in the cytoplasm. Its function is as follows. Cell surface proteoglycan that bears heparan sulfate. Required for correct mitotic spindle orientation of the ABar blastomere division plane and this may be through modulation of astral microtubule array, and in association with the wnt-signaling proteins mig-5 and dsh-2. Involved in the migration of AQR and PQR neurons, which descend from the Q neuroblasts. Promotes the axon guidance of D-type motor neurons. This chain is Probable syndecan, found in Caenorhabditis elegans.